The chain runs to 713 residues: Forkhead box protein P2 (713 aa).

Residues 1–28 are compositionally biased toward polar residues; sequence MMQESVTETISNSSMNQNGMSTLSSQLD. Disordered regions lie at residues 1–44 and 279–337; these read MMQE…SSEV and DNGI…TGAS. Positions 290-303 are enriched in low complexity; sequence TTNNSSSTTSSTTS. Polar residues predominate over residues 313-322; sequence SIVNGQSSVL. A compositionally biased stretch (basic and acidic residues) spans 324 to 335; sequence ARRDSSSHEETG. Residues 344–369 form a C2H2-type zinc finger; that stretch reads GVCKWPGCESICEDFGQFLKHLNNEH. Positions 386–407 are leucine-zipper; sequence VQQLEIQLSKERERLQAMMTHL. The interval 420 to 424 is CTBP1-binding; the sequence is PLNLV. The segment covering 436–457 has biased composition (low complexity); it reads TSPQSLPQTPTTPTAPVTPITQ. The segment at 436–463 is disordered; the sequence is TSPQSLPQTPTTPTAPVTPITQGPSVIT. Residues 502–592 constitute a DNA-binding region (fork-head); sequence RPPFTYATLI…SQKITGSPTL (91 aa). Disordered regions lie at residues 647–666 and 676–713; these read LDHI…QPHI and VIAE…EDLE. Acidic residues predominate over residues 697–713; it reads LEDDREIEEEPLSEDLE.

Forms homodimers and heterodimers with FOXP1 and FOXP4. Dimerization is required for DNA-binding. Interacts with CTBP1. Interacts with FOXP1. Interacts with TBR1. Interacts with ZMYM2.

It is found in the nucleus. In terms of biological role, transcriptional repressor that may play a role in the specification and differentiation of lung epithelium. May also play a role in developing neural, gastrointestinal and cardiovascular tissues. Can act with CTBP1 to synergistically repress transcription but CTPBP1 is not essential. Plays a role in synapse formation by regulating SRPX2 levels. The protein is Forkhead box protein P2 (FOXP2) of Pongo pygmaeus (Bornean orangutan).